The primary structure comprises 370 residues: ABSCISIC ACID-INSENSITIVE 5-like protein 8 (370 aa).

Ser-25, Ser-44, and Ser-69 each carry phosphoserine. Positions 56 to 77 are disordered; it reads SAEETQEGSQRQGSTTLPPTLS. Positions 62–77 are enriched in polar residues; sequence EGSQRQGSTTLPPTLS. Thr-111 carries the phosphothreonine modification. Residues 260-278 are compositionally biased toward polar residues; that stretch reads ESSLLSPSPYISNGSTSTR. The tract at residues 260–281 is disordered; it reads ESSLLSPSPYISNGSTSTRGGK. Positions 293–356 constitute a bZIP domain; sequence VDKKLRRKIK…MEPGMISLHE (64 aa). A basic motif region spans residues 295-314; that stretch reads KKLRRKIKNRESAARSRARK. Positions 328–342 are leucine-zipper; it reads LKKDYEELLKQHVEL. Residues 349–370 form a disordered region; sequence PGMISLHERPERKLRRTKSDIK. Basic and acidic residues predominate over residues 354–370; it reads LHERPERKLRRTKSDIK.

This sequence belongs to the bZIP family. ABI5 subfamily. DNA-binding heterodimer.

The protein resides in the nucleus. In terms of biological role, could participate in abscisic acid-regulated gene expression. In Arabidopsis thaliana (Mouse-ear cress), this protein is ABSCISIC ACID-INSENSITIVE 5-like protein 8 (BZIP15).